Consider the following 201-residue polypeptide: Large ribosomal subunit protein bL25 (201 aa).

It belongs to the bacterial ribosomal protein bL25 family. CTC subfamily. As to quaternary structure, part of the 50S ribosomal subunit; part of the 5S rRNA/L5/L18/L25 subcomplex. Contacts the 5S rRNA. Binds to the 5S rRNA independently of L5 and L18.

This is one of the proteins that binds to the 5S RNA in the ribosome where it forms part of the central protuberance. The sequence is that of Large ribosomal subunit protein bL25 from Burkholderia multivorans (strain ATCC 17616 / 249).